A 371-amino-acid chain; its full sequence is F-box protein At2g26850 (371 aa).

In terms of domain architecture, F-box spans 59 to 105 (KMSILDLPDLPLDCILELLPPSELCTMARVCSSLRERCVSDHLWEKH).

This is F-box protein At2g26850 from Arabidopsis thaliana (Mouse-ear cress).